A 401-amino-acid chain; its full sequence is 2-amino-3-carboxymuconate-6-semialdehyde decarboxylase (401 aa).

Zn(2+)-binding residues include H18 and H20. R59 contributes to the substrate binding site. Zn(2+) is bound by residues H234 and D352.

The protein belongs to the metallo-dependent hydrolases superfamily. ACMSD family. In terms of assembly, monomer.

It carries out the reaction 2-amino-3-carboxymuconate 6-semialdehyde + H(+) = 2-aminomuconate 6-semialdehyde + CO2. It participates in secondary metabolite metabolism; quinolate metabolism. Functionally, converts alpha-amino-beta-carboxymuconate-epsilon-semialdehyde (ACMS) to alpha-aminomuconate semialdehyde (AMS). The chain is 2-amino-3-carboxymuconate-6-semialdehyde decarboxylase from Caenorhabditis elegans.